A 98-amino-acid polypeptide reads, in one-letter code: Beta-2-microglobulin (98 aa).

The Ig-like C1-type domain occupies proline 4–tyrosine 92. Cysteines 24 and 79 form a disulfide.

Belongs to the beta-2-microglobulin family. Heterodimer of an alpha chain and a beta chain. Beta-2-microglobulin is the beta-chain of major histocompatibility complex class I molecules.

Its subcellular location is the secreted. Its function is as follows. Component of the class I major histocompatibility complex (MHC). Involved in the presentation of peptide antigens to the immune system. The sequence is that of Beta-2-microglobulin (B2M) from Meleagris gallopavo (Wild turkey).